A 163-amino-acid chain; its full sequence is Shikimate kinase (163 aa).

10-15 (GVGKTT) contributes to the ATP binding site. Threonine 14 contributes to the Mg(2+) binding site. Residues aspartate 28, arginine 52, and glycine 75 each coordinate substrate. Arginine 116 provides a ligand contact to ATP. Arginine 134 contributes to the substrate binding site. An ATP-binding site is contributed by arginine 151.

Belongs to the shikimate kinase family. As to quaternary structure, monomer. It depends on Mg(2+) as a cofactor.

It localises to the cytoplasm. The enzyme catalyses shikimate + ATP = 3-phosphoshikimate + ADP + H(+). It functions in the pathway metabolic intermediate biosynthesis; chorismate biosynthesis; chorismate from D-erythrose 4-phosphate and phosphoenolpyruvate: step 5/7. Functionally, catalyzes the specific phosphorylation of the 3-hydroxyl group of shikimic acid using ATP as a cosubstrate. This Streptococcus pyogenes serotype M12 (strain MGAS2096) protein is Shikimate kinase.